The chain runs to 185 residues: CASP-like protein 2C3 (185 aa).

The Cytoplasmic segment spans residues 1 to 13; it reads MAAAARVSEVKAE. The chain crosses the membrane as a helical span at residues 14 to 34; the sequence is GLLRGACAALAAAAALLVGLS. Topologically, residues 35–53 are extracellular; the sequence is TQTETVLLVRKKATVKDVQ. A helical membrane pass occupies residues 54-74; that stretch reads ALWVLAMAAAAAAGYHLLQLL. Topologically, residues 75–104 are cytoplasmic; sequence KCLYLGRVGGARPCRRSSRALAWTCLLLDK. A helical membrane pass occupies residues 105–125; it reads ACAYTTFATTVAAAQACVVAL. Residues 126–146 lie on the Extracellular side of the membrane; that stretch reads DGAHAVQWTKLCNIYTRFCEQ. A helical membrane pass occupies residues 147 to 167; sequence VAGSLVLGMLAAVGTAVLSAA. The Cytoplasmic portion of the chain corresponds to 168 to 185; the sequence is SARNVFRHYSSLETYAAH.

Belongs to the Casparian strip membrane proteins (CASP) family. In terms of assembly, homodimer and heterodimers.

It is found in the cell membrane. In Zea mays (Maize), this protein is CASP-like protein 2C3.